We begin with the raw amino-acid sequence, 759 residues long: MKKKIESYQGAAGGWGAVKSVANAVRKQMDIRQDVIAMFDMNKPEGFDCPGCAWPDPKHSASFDICENGAKAIAWEVTDKQVNASFFAENTVQSLLTWGDHELEAAGRLTQPLKYDAVSDCYKPLSWQQAFDEIGARLQSYSDPNQVEFYTSGRTSNEAAFLYQLFAREYGSNNFPDCSNMCHEPTSVGLAASIGVGKGTVLLEDFEKCDLVICIGHNPGTNHPRMLTSLRALVKRGAKMIAINPLQERGLERFTAPQNPFEMLTNSETQLASAYYNVRIGGDMALLKGMMRLLIERDDAASAAGRPSLLDDEFIQTHTVGFDELRRDVLNSEWKDIERISGLSQTQIAELADAYAAAERTIICYGMGITQHEHGTQNVQQLVNLLLMKGNIGKPGAGICPLRGHSNVQGDRTVGITEKPSAEFLARLGERYGFTPPHAPGHAAIASMQAICTGQARALICMGGNFALAMPDREASAVPLTQLDLAVHVATKLNRSHLLTARHSYILPVLGRSEIDMQKNGAQAVTVEDSMSMIHASRGVLKPAGVMLKSECAVVAGIAQAALPQSVVAWEYLVEDYDRIRNDIEAVLPEFADYNQRIRHPGGFHLINAAAERRWMTPSGKANFITSKGLLEDPSSAFNSKLVMATVRSHDQYNTTIYGMDDRYRGVFGQRDVVFMSAKQAKICRVKNGERVNLIALTPDGKRSSRRMDRLKVVIYPMADRSLVTYFPESNHMLTLDNHDPLSGIPGYKSIPVELEPSN.

[4Fe-4S] cluster is bound by residues C49 and C52.

Belongs to the prokaryotic molybdopterin-containing oxidoreductase family. [4Fe-4S] cluster is required as a cofactor. The cofactor is Mo-bis(molybdopterin guanine dinucleotide).

Probably involved in acid resistance. The sequence is that of Protein YdeP (ydeP) from Escherichia coli (strain K12).